A 507-amino-acid polypeptide reads, in one-letter code: MATLRADEISNIIRERIEQYTTEVKIVNTGTVLQVGDGIARIHGLDEVMAGELVEFEEGTIGIALNLESNNVGVVLMGDGLMIQEGSSVKATGRIAQIPVSEAYLGRVINALAKPIDGRGEIPASESRLIESPAPGIISRRSVYEPMQTGLIAIDSMIPIGRGQRELIIGDRQTGKTAVATDTILNQKGQNVICVYVAIGQKASSVAQVVTTFQEQGAMEYTIVVAETADAPATLQYLAPYTGAALAEYFMYRERHTSIIYDDPSKQAQAYRQMSLLLRRPPGREAYPGDVFYLHSRLLERAAKSSSRLGEGSMTALPIVETQAGDVSAYIPTNVISITDGQIFLSADLFNSGIRPAINVGISVSRVGSAAQIKAMKQVAGKLKLELAQFAELEAFAQFASDLDKATQNQLARGQRLRELLKQSQAAPLTVGEQILTIYTGTNGYLDSLEIGQVKKFLVELRTYLKTNKPQFQEIISSTKTLTEEAEVLLKEAIQEQTERFILQEQT.

170–177 serves as a coordination point for ATP; that stretch reads GDRQTGKT.

The protein belongs to the ATPase alpha/beta chains family. As to quaternary structure, F-type ATPases have 2 components, CF(1) - the catalytic core - and CF(0) - the membrane proton channel. CF(1) has five subunits: alpha(3), beta(3), gamma(1), delta(1), epsilon(1). CF(0) has four main subunits: a, b, b' and c.

It is found in the plastid. The protein resides in the chloroplast thylakoid membrane. The enzyme catalyses ATP + H2O + 4 H(+)(in) = ADP + phosphate + 5 H(+)(out). In terms of biological role, produces ATP from ADP in the presence of a proton gradient across the membrane. The alpha chain is a regulatory subunit. This Nandina domestica (Heavenly bamboo) protein is ATP synthase subunit alpha, chloroplastic.